The sequence spans 976 residues: R3H domain-containing protein 2 (976 aa).

Disordered stretches follow at residues 32-71 (ISKT…AKSN) and 105-147 (ISCP…QEYT). Residues 36–56 (PSKEEIEKECEDTSLRQETQR) show a composition bias toward basic and acidic residues. Ser-37 carries the post-translational modification Phosphoserine. Basic residues predominate over residues 58–71 (TSNHGHARKRAKSN). The segment covering 109 to 143 (SDKEEEKSTKDVSEKEDKDKNKEKIPRKMLSRDSS) has biased composition (basic and acidic residues). Ser-143 is modified (phosphoserine). The 64-residue stretch at 169-232 (RMMLLKLEQE…AVIINKTSNT (64 aa)) folds into the R3H domain. In terms of domain architecture, SUZ spans 233–310 (RIPEQRFSEH…NREGLSRTSS (78 aa)). The segment covering 257 to 269 (LKRDDASMDRDDN) has biased composition (basic and acidic residues). Disordered regions lie at residues 257-376 (LKRD…ISRP), 401-457 (CTAQ…EAAD), 480-560 (ASTG…PGLQ), 661-725 (GTSP…PSMV), and 738-780 (RGQK…SLSS). Residues 306-317 (SRTSSSRQSSTD) are compositionally biased toward low complexity. Residues Ser-330, Ser-333, and Ser-349 each carry the phosphoserine modification. Residues 401 to 415 (CTAQQQQQQQQQQLP) show a composition bias toward low complexity. 2 stretches are compositionally biased toward polar residues: residues 441 to 453 (PFGQ…QGST) and 480 to 504 (ASTG…QQVL). Over residues 543–560 (SPQRGQQLPQPSQQPGLQ) the composition is skewed to low complexity. Over residues 682–691 (SPSPCSPPQM) the composition is skewed to pro residues. The span at 692–714 (PQQYSGVSPSGPGVVVMQLNVPN) shows a compositional bias: low complexity. Polar residues predominate over residues 748-758 (PDSSPQANTQM). A compositionally biased stretch (low complexity) spans 759-777 (SSSPVTSPTQSPAPSPVTS). A phosphoserine mark is found at Ser-853 and Ser-855. Phosphothreonine occurs at positions 856 and 860.

The protein resides in the nucleus. The chain is R3H domain-containing protein 2 (R3HDM2) from Homo sapiens (Human).